A 621-amino-acid chain; its full sequence is Kelch-like protein 40 (621 aa).

Positions 33-98 (LDCVVRVGER…LYTSEIALDE (66 aa)) constitute a BTB domain. Positions 133-239 (CLAVFRLGLL…PRAFLETRVE (107 aa)) constitute a BACK domain. Residues 265–298 (LTTLRKKKKEKGEQTARAKEANQGTEDTKAEDDE) are disordered. Residues 274-284 (EKGEQTARAKE) show a composition bias toward basic and acidic residues. 5 Kelch repeats span residues 360-412 (QVFV…EALN), 413-462 (AIYV…SHMD), 463-510 (LVYV…VHDG), 512-557 (IFVA…SLAG), and 559-613 (LYAL…PVRL).

Belongs to the KLHL40 family. In terms of assembly, component of the BCR(KLHL40) E3 ubiquitin ligase complex, at least composed of CUL3, KLHL40 and RBX1. Interacts with LMOD3. As to expression, specifically expressed in skeletal muscles in embryonic, neonatal and adults. Expressed in various types of muscles, including extensor digitorum longus, gastrocnemius, soleus, diaphragm, masseter and heart (at protein level). Not detected in brain, liver and lung (at protein level).

It is found in the cytoplasm. Its subcellular location is the myofibril. The protein localises to the sarcomere. It localises to the a band. The protein resides in the i band. In terms of biological role, substrate-specific adapter of a BCR (BTB-CUL3-RBX1) E3 ubiquitin ligase complex that acts as a key regulator of skeletal muscle development. The BCR(KLHL40) complex acts by mediating ubiquitination and degradation of TFDP1, thereby regulating the activity of the E2F:DP transcription factor complex. Promotes stabilization of LMOD3 by acting as a negative regulator of LMOD3 ubiquitination; the molecular process by which it negatively regulates ubiquitination of LMOD3 is however unclear. In Mus musculus (Mouse), this protein is Kelch-like protein 40.